The chain runs to 214 residues: Isochorismatase family protein 2B (214 aa).

The protein belongs to the isochorismatase family.

In Dictyostelium discoideum (Social amoeba), this protein is Isochorismatase family protein 2B.